The primary structure comprises 440 residues: Protein disulfide-isomerase 5-2 (440 aa).

Positions 1-23 are cleaved as a signal peptide; the sequence is MRSLKLLLCWISFLTLSISISAS. The region spanning 24 to 139 is the Thioredoxin domain; the sequence is SDDQFTLDGT…LVRYLKKFVA (116 aa). Catalysis depends on nucleophile residues Cys61 and Cys64. A disulfide bond links Cys61 and Cys64. Thr160 carries the post-translational modification Phosphothreonine. N-linked (GlcNAc...) asparagine glycosylation occurs at Asn171. The helical transmembrane segment at 376–396 threads the bilayer; that stretch reads SMIGIRSVYILVFLVAVIMML. Residues 406-440 are disordered; sequence TGVRTATAVRERVDQATTVPEDESSEHKPSDKKED. The span at 430 to 440 shows a compositional bias: basic and acidic residues; sequence SEHKPSDKKED.

Belongs to the protein disulfide isomerase family. Widely expressed.

The protein localises to the membrane. In terms of biological role, acts as a protein-folding catalyst that interacts with nascent polypeptides to catalyze the formation, isomerization, and reduction or oxidation of disulfide bonds. The chain is Protein disulfide-isomerase 5-2 (PDIL5-2) from Arabidopsis thaliana (Mouse-ear cress).